The sequence spans 353 residues: Very-long-chain 3-oxoacyl-CoA reductase (353 aa).

A helical membrane pass occupies residues 33-53; the sequence is AAWALIAAGGFFVISRALLFG. NADP(+)-binding residues include Val78, Asp133, Asp141, Asn160, Tyr227, Lys231, Ile260, and Ser262. Residue Tyr227 is the Proton donor of the active site. Lys231 functions as the Lowers pKa of active site Tyr in the catalytic mechanism.

This sequence belongs to the short-chain dehydrogenases/reductases (SDR) family.

Its subcellular location is the endoplasmic reticulum membrane. The catalysed reaction is a very-long-chain (3R)-3-hydroxyacyl-CoA + NADP(+) = a very-long-chain 3-oxoacyl-CoA + NADPH + H(+). It participates in lipid metabolism; fatty acid biosynthesis. In terms of biological role, component of the microsomal membrane bound fatty acid elongation system, which produces the 26-carbon very long-chain fatty acids (VLCFA) from palmitate. Catalyzes the reduction of the 3-ketoacyl-CoA intermediate that is formed in each cycle of fatty acid elongation. VLCFAs serve as precursors for ceramide and sphingolipids. The protein is Very-long-chain 3-oxoacyl-CoA reductase of Aspergillus terreus (strain NIH 2624 / FGSC A1156).